The following is a 180-amino-acid chain: UPF0227 protein YcfP (180 aa).

Belongs to the UPF0227 family.

This chain is UPF0227 protein YcfP, found in Salmonella arizonae (strain ATCC BAA-731 / CDC346-86 / RSK2980).